A 166-amino-acid chain; its full sequence is Peptidyl-prolyl cis-trans isomerase cyp18 (166 aa).

Positions 2–164 constitute a PPIase cyclophilin-type domain; it reads STVELNTSAG…QPVVIESAKI (163 aa).

Belongs to the cyclophilin-type PPIase family. Monomer.

It localises to the cytoplasm. The enzyme catalyses [protein]-peptidylproline (omega=180) = [protein]-peptidylproline (omega=0). With respect to regulation, inhibition by cyclosporin A with a Ki of 21 mu-mol. Its function is as follows. PPIases accelerate the folding of proteins. It catalyzes the cis-trans isomerization of proline imidic peptide bonds in oligopeptides. This is Peptidyl-prolyl cis-trans isomerase cyp18 from Streptomyces antibioticus.